Consider the following 66-residue polypeptide: DNA-directed RNA polymerase subunit Rpo10 (66 aa).

Residues cysteine 7, cysteine 10, cysteine 44, and cysteine 45 each contribute to the Zn(2+) site.

It belongs to the archaeal Rpo10/eukaryotic RPB10 RNA polymerase subunit family. Part of the RNA polymerase complex. The cofactor is Zn(2+).

It is found in the cytoplasm. The enzyme catalyses RNA(n) + a ribonucleoside 5'-triphosphate = RNA(n+1) + diphosphate. Functionally, DNA-dependent RNA polymerase (RNAP) catalyzes the transcription of DNA into RNA using the four ribonucleoside triphosphates as substrates. The polypeptide is DNA-directed RNA polymerase subunit Rpo10 (Pyrobaculum islandicum (strain DSM 4184 / JCM 9189 / GEO3)).